The following is a 506-amino-acid chain: Cobyric acid synthase (506 aa).

Residues 251 to 448 (DITIAIVQLP…LHGLFDSDAF (198 aa)) enclose the GATase cobBQ-type domain. Cysteine 332 (nucleophile) is an active-site residue. Histidine 440 is an active-site residue.

Belongs to the CobB/CobQ family. CobQ subfamily.

It functions in the pathway cofactor biosynthesis; adenosylcobalamin biosynthesis. Functionally, catalyzes amidations at positions B, D, E, and G on adenosylcobyrinic A,C-diamide. NH(2) groups are provided by glutamine, and one molecule of ATP is hydrogenolyzed for each amidation. The chain is Cobyric acid synthase from Salmonella heidelberg (strain SL476).